The sequence spans 320 residues: Putative fatty acid elongase 3 (320 aa).

An N-linked (GlcNAc...) asparagine glycan is attached at asparagine 14. Transmembrane regions (helical) follow at residues 33–53, 67–87, 120–140, 145–165, 203–223, and 242–262; these read WMQN…AVIF, LDTP…LGFL, FWTE…IFIV, PLIF…WHAY, MAMV…IIGV, and LGLC…FFYH.

This sequence belongs to the ELO family.

It localises to the membrane. It carries out the reaction a very-long-chain acyl-CoA + malonyl-CoA + H(+) = a very-long-chain 3-oxoacyl-CoA + CO2 + CoA. It participates in lipid metabolism; fatty acid biosynthesis. Functionally, could be implicated in synthesis of very long chain fatty acids. May be required for normally rapid growth. This is Putative fatty acid elongase 3 (elo-3) from Caenorhabditis elegans.